The primary structure comprises 269 residues: Endo-1,3-1,4-beta-glycanase ExoK (269 aa).

Positions 1-29 (MTIDRYRRFARLAFIATLPLAGLATAAAA) are cleaved as a signal peptide. The GH16 domain maps to 40 to 252 (DDFDTLDTRV…RVAFTAAGDE (213 aa)). Catalysis depends on glutamate 138, which acts as the Nucleophile. Glutamate 142 acts as the Proton donor in catalysis.

Belongs to the glycosyl hydrolase 16 family.

The protein localises to the secreted. The protein operates within glycan metabolism; exopolysaccharide biosynthesis. Functionally, cleaves high molecular weight succinoglycan to yield LMW succinoglycan. Dynamically regulates the molecular weight distribution of succinoglycan by cleaving nascent succinoglycan only during a limited period after its synthesis, perhaps before it undergoes a time-dependent change in its conformation or aggregation state. The chain is Endo-1,3-1,4-beta-glycanase ExoK (exoK) from Rhizobium meliloti (strain 1021) (Ensifer meliloti).